The chain runs to 209 residues: uncharacterized protein (209 aa).

A coiled-coil region spans residues 39–75 (VSFENFMERYDTMEKNIQDLQNKYEEMANNLVAVMAD). Residues 103–131 (TMKDATSLPPPNPNNEQSVFTNGSPTSGK) form a disordered region. Residues 116–129 (NNEQSVFTNGSPTS) show a composition bias toward polar residues.

It belongs to the asfivirus K205R family.

It localises to the host cytoplasm. In terms of biological role, induces host endoplasmic reticulum stress and consequently activates autophagy and NF-kappa-B signaling pathway. In turn, may induce autophagy-mediated STING1 degradation and innate immune evasion. This is an uncharacterized protein from Ornithodoros (relapsing fever ticks).